Reading from the N-terminus, the 331-residue chain is 5-dehydro-2-deoxygluconokinase (331 aa).

It belongs to the carbohydrate kinase PfkB family.

It carries out the reaction 5-dehydro-2-deoxy-D-gluconate + ATP = 6-phospho-5-dehydro-2-deoxy-D-gluconate + ADP + H(+). Its pathway is polyol metabolism; myo-inositol degradation into acetyl-CoA; acetyl-CoA from myo-inositol: step 5/7. Functionally, catalyzes the phosphorylation of 5-dehydro-2-deoxy-D-gluconate (2-deoxy-5-keto-D-gluconate or DKG) to 6-phospho-5-dehydro-2-deoxy-D-gluconate (DKGP). The sequence is that of 5-dehydro-2-deoxygluconokinase from Photobacterium profundum (strain SS9).